A 440-amino-acid chain; its full sequence is Homocitrate synthase, mitochondrial (440 aa).

The segment covering 1 to 23 (MSENNEFQSVTESTTAPTTSNPY) has biased composition (polar residues). The segment at 1-27 (MSENNEFQSVTESTTAPTTSNPYGPNP) is disordered. In terms of domain architecture, Pyruvate carboxyltransferase spans 37–290 (FQLIDSTLRE…RSKYKLHKIR (254 aa)). Arg45 provides a ligand contact to 2-oxoglutarate. Glu46 contacts Mg(2+). 2-oxoglutarate is bound by residues His105, Arg165, and Thr199. Positions 226 and 228 each coordinate Mg(2+). The active-site Proton acceptor is His323. Ser399 is subject to Phosphoserine. Thr410 bears the Phosphothreonine mark.

Belongs to the alpha-IPM synthase/homocitrate synthase family. Homocitrate synthase LYS20/LYS21 subfamily. Mg(2+) is required as a cofactor. It depends on Mn(2+) as a cofactor.

It localises to the mitochondrion. It catalyses the reaction acetyl-CoA + 2-oxoglutarate + H2O = (2R)-homocitrate + CoA + H(+). The protein operates within amino-acid biosynthesis; L-lysine biosynthesis via AAA pathway; L-alpha-aminoadipate from 2-oxoglutarate: step 1/5. Functionally, catalyzes the aldol-type condensation of 2-oxoglutarate with acetyl-CoA to yield homocitrate. Carries out the first step of the alpha-aminoadipate (AAA) lysine biosynthesis pathway. The protein is Homocitrate synthase, mitochondrial (LYS21) of Saccharomyces cerevisiae (strain ATCC 204508 / S288c) (Baker's yeast).